A 490-amino-acid polypeptide reads, in one-letter code: Bifunctional protein HldE (490 aa).

The interval 1–330 (MLDFEQLSPA…RKILPHAFLA (330 aa)) is ribokinase. 205 to 208 (NRKE) lines the ATP pocket. Aspartate 275 is an active-site residue. The tract at residues 358–490 (FTNGCFDILH…LVARAQNGKS (133 aa)) is cytidylyltransferase.

The protein in the N-terminal section; belongs to the carbohydrate kinase PfkB family. This sequence in the C-terminal section; belongs to the cytidylyltransferase family. As to quaternary structure, homodimer.

It carries out the reaction D-glycero-beta-D-manno-heptose 7-phosphate + ATP = D-glycero-beta-D-manno-heptose 1,7-bisphosphate + ADP + H(+). The enzyme catalyses D-glycero-beta-D-manno-heptose 1-phosphate + ATP + H(+) = ADP-D-glycero-beta-D-manno-heptose + diphosphate. It functions in the pathway nucleotide-sugar biosynthesis; ADP-L-glycero-beta-D-manno-heptose biosynthesis; ADP-L-glycero-beta-D-manno-heptose from D-glycero-beta-D-manno-heptose 7-phosphate: step 1/4. It participates in nucleotide-sugar biosynthesis; ADP-L-glycero-beta-D-manno-heptose biosynthesis; ADP-L-glycero-beta-D-manno-heptose from D-glycero-beta-D-manno-heptose 7-phosphate: step 3/4. In terms of biological role, catalyzes the phosphorylation of D-glycero-D-manno-heptose 7-phosphate at the C-1 position to selectively form D-glycero-beta-D-manno-heptose-1,7-bisphosphate. Its function is as follows. Catalyzes the ADP transfer from ATP to D-glycero-beta-D-manno-heptose 1-phosphate, yielding ADP-D-glycero-beta-D-manno-heptose. The protein is Bifunctional protein HldE of Rhodopseudomonas palustris (strain BisA53).